The chain runs to 681 residues: Protein hook (681 aa).

The Calponin-homology (CH) domain occupies 6-123 (NEMYYSLLEW…RLLQLVLGCA (118 aa)). Coiled coils occupy residues 135 to 439 (EIMS…LKCG) and 482 to 584 (QTAL…KYRK).

It belongs to the hook family. Homodimer. Interacts with microtubules via its N-terminus.

The protein localises to the cytoplasm. Its subcellular location is the cytoskeleton. The protein resides in the endosome. It is found in the synapse. Involved in endocytic trafficking by stabilizing organelles of the endocytic pathway. Probably acts as a cytoskeletal linker protein required to tether endosome vesicles to the cytoskeleton. Involved in modulation of endocytosis at stages required for down-regulation of membrane proteins that control synapse size. Not involved in synaptic vesicle recycling. Required in R7 cells for boss endocytosis into multivesicular bodies (MVBs). Has a role in regulating adult longevity. The chain is Protein hook from Drosophila ananassae (Fruit fly).